The chain runs to 648 residues: Beta-glucuronidase (648 aa).

The signal sequence occupies residues 1–22; the sequence is MSLKWSACWVALGQLLCSCALA. 2 N-linked (GlcNAc...) asparagine glycosylation sites follow: asparagine 172 and asparagine 416. The active-site Proton donor is glutamate 447. N-linked (GlcNAc...) asparagine glycosylation occurs at asparagine 627.

This sequence belongs to the glycosyl hydrolase 2 family. Homotetramer.

The protein resides in the lysosome. It is found in the endoplasmic reticulum. It catalyses the reaction a beta-D-glucuronoside + H2O = D-glucuronate + an alcohol. Inhibited by L-aspartic acid. Its function is as follows. Plays an important role in the degradation of dermatan and keratan sulfates. This Mus musculus (Mouse) protein is Beta-glucuronidase (Gusb).